A 215-amino-acid polypeptide reads, in one-letter code: MTTVAVNAPLPPPLVELCNRRPIPTPRIISLQRQLISTPVVKNYQADVQEAINDFKRLNITPGHLGEVIDTMGQQGKLLPEIIEADDDFKVNQTRNLSCKTVEYLNFLENDKLFRCRLCYTHADWLWCDFHRNHAYRGTRDITCNNYVEHLNSDMGVVMLIEEYFYCLSSCNFKQDAKRALQTLTKFESLSDLMASYNFSTPDLDTNAYELMDFE.

As to quaternary structure, interacts with host proteins P40, P34 ands P20.

Its subcellular location is the host nucleus. Functionally, plays a role in the translocation of the P40 subunit of host Arp2/3 to the nucleus. The robust nuclear accumulation of Arp2/3 induces nuclear actin polymerization to assist in virus replication. Mechanistically, subverts the host CRM1-dependent nuclear export pathway leading to Arp2/3 acumulation in the host nucleus. The sequence is that of Protein Ac34 (Ac34) from Autographa californica nuclear polyhedrosis virus (AcMNPV).